Consider the following 434-residue polypeptide: Quinolone resistance transporter (434 aa).

The next 12 membrane-spanning stretches (helical) occupy residues leucine 15 to phenylalanine 35, glycine 45 to phenylalanine 65, isoleucine 85 to phenylalanine 105, phenylalanine 110 to tryptophan 130, methionine 142 to leucine 162, tryptophan 175 to leucine 195, valine 241 to tryptophan 261, isoleucine 275 to isoleucine 295, tyrosine 306 to leucine 326, leucine 333 to leucine 353, isoleucine 367 to leucine 387, and alanine 396 to valine 416.

The protein belongs to the major facilitator superfamily.

The protein localises to the cell inner membrane. In terms of biological role, efflux pump that mediates resistance to quinolone-type antibiotics. The protein is Quinolone resistance transporter of Acinetobacter baumannii.